A 44-amino-acid chain; its full sequence is Antimicrobial peptide 2 (44 aa).

Disulfide bonds. Expressed in flowers but not in leaves, seeds or roots (at protein level).

Its function is as follows. Antimicrobial peptide. Active against fungal species B.cinerea (IC(50)=5.2 uM), A.niger (IC(50)=2.6 uM) and B.sorokinina (IC(50)=5.2 uM) but not against F.oxysporum, F.graminearum and P.debaryanum at concentrations below 10 uM. Inhibits growth of P.infestans at concentration between 1.3 uM and 5.2 uM. Active against bacterial species P.syringae, B.subtilis, X.campestris and C.michiganense. In Taraxacum officinale (Common dandelion), this protein is Antimicrobial peptide 2.